A 364-amino-acid chain; its full sequence is SH3 and cysteine-rich domain-containing protein 3 (364 aa).

Disordered stretches follow at residues 1–89 and 189–244; these read MTEK…NDKP and NKER…HKQP. The segment covering 64 to 78 has biased composition (acidic residues); the sequence is YEEEEEEEEEEEEPP. The Phorbol-ester/DAG-type zinc-finger motif lies at 89–140; it reads PHKFKDHFFKKPKFCDVCARMIVLNNKFGLRCKNCKTNIHEHCQSYVEMQRC. Residues 212-242 are compositionally biased toward basic and acidic residues; sequence ESARPEEGKPQDGNPEGDKKAEKKTPDDKHK. SH3 domains are found at residues 247 to 306 and 307 to 364; these read QQSH…RVRA and GERV…LEEI.

As to quaternary structure, interacts (via SH3 domains) with the calcium channels CACNA1S and CACNA1C. Component of a calcium channel complex with CACNA1S and CACNB1. Component of a calcium channel complex with CACNA1C and CACNB1.

The protein localises to the cytoplasm. It is found in the cell membrane. Its subcellular location is the sarcolemma. It localises to the T-tubule. Its function is as follows. Required for normal excitation-contraction coupling in skeletal muscle and for normal muscle contraction in response to membrane depolarization. Required for normal Ca(2+) release from the sarcplasmic reticulum, which ultimately leads to muscle contraction. Probably functions via its effects on muscle calcium channels. Increases CACNA1S channel activity, in addition to its role in enhancing the expression of CACNA1S at the cell membrane. Has a redundant role in promoting the expression of the calcium channel CACNA1S at the cell membrane. Slows down the inactivation rate of the calcium channel CACNA1C. This chain is SH3 and cysteine-rich domain-containing protein 3 (STAC3), found in Homo sapiens (Human).